A 109-amino-acid chain; its full sequence is Archaeosine synthase (109 aa).

The Thioimide intermediate role is filled by Cys-21. The Proton donor/acceptor role is filled by Asp-28. Residues Asp-28, 43-46 (LAIE), and 62-63 (HE) each bind substrate.

This sequence belongs to the archaeosine synthase type 2 family. In terms of assembly, forms a symmetric tunnel-fold (T-fold) homodecamer of two head-to-head facing pentameric subunits, with 10 active sites at the intermonomer interfaces.

The enzyme catalyses 7-cyano-7-carbaguanosine(15) in tRNA + NH4(+) = archaeosine(15) in tRNA. Its pathway is tRNA modification; archaeosine-tRNA biosynthesis. In terms of biological role, is responsible for the final step in the biosynthesis of archaeosine, a modified nucleoside present in the dihydrouridine loop (D-loop) of archaeal tRNA. Catalyzes the conversion of 7-cyano-7-deazaguanine (preQ0)-modified tRNA to archaeosine-tRNA, transforming a nitrile group to a formamidine group. Can use neither glutamine nor asparagine as amino donor in vitro, is only able to utilize free ammonium. However, the enzyme might function in vivo with a partner that serves to generate ammonium. The sequence is that of Archaeosine synthase from Pyrobaculum calidifontis (strain DSM 21063 / JCM 11548 / VA1).